The chain runs to 685 residues: Envelope glycoprotein (685 aa).

The first 41 residues, Met1 to Gly41, serve as a signal peptide directing secretion. Topologically, residues Thr42 to Leu632 are extracellular. Cystine bridges form between Cys148/Cys169 and Cys161/Cys174. The disordered stretch occupies residues Pro276–Ala309. Positions Leu283 to Leu297 are enriched in pro residues. Positions Asp299–Ala309 are enriched in polar residues. 2 N-linked (GlcNAc...) asparagine; by host glycosylation sites follow: Asn301 and Asn344. 3 disulfide bridges follow: Cys354–Cys357, Cys354–Cys584, and Cys576–Cys583. A CXXC motif is present at residues Cys354–Cys357. N-linked (GlcNAc...) asparagine; by host glycosylation is found at Asn415, Asn421, Asn433, and Asn453. Residues Val492–Ser512 are fusion peptide. 2 coiled-coil regions span residues Ile520–Leu570 and Lys580–Asn616. The tract at residues Leu559–Leu575 is immunosuppression. The short motif at Cys576–Cys584 is the CX6CC element. Residues Ser633–Ile653 traverse the membrane as a helical segment. The S-palmitoyl cysteine; by host moiety is linked to residue Cys651. Residues Asn654–Leu685 lie on the Cytoplasmic side of the membrane. Residues Tyr676–Leu679 carry the YXXL motif; contains endocytosis signal motif.

As to quaternary structure, the mature envelope protein (Env) consists of a trimer of SU-TM heterodimers attached by a labile interchain disulfide bond. Post-translationally, specific enzymatic cleavages in vivo yield mature proteins. Envelope glycoproteins are synthesized as an inactive precursor that is N-glycosylated and processed likely by host cell furin or by a furin-like protease in the Golgi to yield the mature SU and TM proteins. The cleavage site between SU and TM requires the minimal sequence [KR]-X-[KR]-R. The R-peptide is released from the C-terminus of the cytoplasmic tail of the TM protein upon particle formation as a result of proteolytic cleavage by the viral protease. Cleavage of this peptide is required for TM to become fusogenic. In terms of processing, the CXXC motif is highly conserved across a broad range of retroviral envelope proteins. It is thought to participate in the formation of a labile disulfide bond possibly with the CX6CC motif present in the transmembrane protein. Isomerization of the intersubunit disulfide bond to an SU intrachain disulfide bond is thought to occur upon receptor recognition in order to allow membrane fusion. The transmembrane protein is palmitoylated. Post-translationally, the R-peptide is palmitoylated.

It is found in the virion membrane. The protein resides in the host cell membrane. Its function is as follows. The surface protein (SU) attaches the virus to the host cell by binding to its receptor. This interaction triggers the refolding of the transmembrane protein (TM) and is thought to activate its fusogenic potential by unmasking its fusion peptide. Fusion occurs at the host cell plasma membrane. In terms of biological role, the transmembrane protein (TM) acts as a class I viral fusion protein. Under the current model, the protein has at least 3 conformational states: pre-fusion native state, pre-hairpin intermediate state, and post-fusion hairpin state. During viral and target cell membrane fusion, the coiled coil regions (heptad repeats) assume a trimer-of-hairpins structure, positioning the fusion peptide in close proximity to the C-terminal region of the ectodomain. The formation of this structure appears to drive apposition and subsequent fusion of viral and target cell membranes. Membranes fusion leads to delivery of the nucleocapsid into the cytoplasm. This chain is Envelope glycoprotein (env), found in Gibbon ape leukemia virus (GALV).